Here is a 273-residue protein sequence, read N- to C-terminus: Proteasome subunit beta (273 aa).

Positions 1–50 (MRKDGARLALPLFDPRHDPGPDFAALVSRDAARTVPTSGDGSLGAQVPHG) are cleaved as a propeptide — removed in mature form; by autocatalysis. Catalysis depends on threonine 51, which acts as the Nucleophile.

The protein belongs to the peptidase T1B family. In terms of assembly, the 20S proteasome core is composed of 14 alpha and 14 beta subunits that assemble into four stacked heptameric rings, resulting in a barrel-shaped structure. The two inner rings, each composed of seven catalytic beta subunits, are sandwiched by two outer rings, each composed of seven alpha subunits. The catalytic chamber with the active sites is on the inside of the barrel. Has a gated structure, the ends of the cylinder being occluded by the N-termini of the alpha-subunits. Is capped by the proteasome-associated ATPase, ARC.

It localises to the cytoplasm. The catalysed reaction is Cleavage of peptide bonds with very broad specificity.. It functions in the pathway protein degradation; proteasomal Pup-dependent pathway. With respect to regulation, the formation of the proteasomal ATPase ARC-20S proteasome complex, likely via the docking of the C-termini of ARC into the intersubunit pockets in the alpha-rings, may trigger opening of the gate for substrate entry. Interconversion between the open-gate and close-gate conformations leads to a dynamic regulation of the 20S proteasome proteolysis activity. Component of the proteasome core, a large protease complex with broad specificity involved in protein degradation. This chain is Proteasome subunit beta, found in Acidimicrobium ferrooxidans (strain DSM 10331 / JCM 15462 / NBRC 103882 / ICP).